We begin with the raw amino-acid sequence, 284 residues long: 2-dehydro-3-deoxyphosphooctonate aldolase (284 aa).

The protein belongs to the KdsA family.

The protein resides in the cytoplasm. It catalyses the reaction D-arabinose 5-phosphate + phosphoenolpyruvate + H2O = 3-deoxy-alpha-D-manno-2-octulosonate-8-phosphate + phosphate. The protein operates within carbohydrate biosynthesis; 3-deoxy-D-manno-octulosonate biosynthesis; 3-deoxy-D-manno-octulosonate from D-ribulose 5-phosphate: step 2/3. It participates in bacterial outer membrane biogenesis; lipopolysaccharide biosynthesis. The polypeptide is 2-dehydro-3-deoxyphosphooctonate aldolase (Vibrio vulnificus (strain CMCP6)).